The primary structure comprises 218 residues: Thiopurine S-methyltransferase (218 aa).

Residues tryptophan 11, leucine 46, glutamate 67, and arginine 122 each contribute to the S-adenosyl-L-methionine site.

It belongs to the class I-like SAM-binding methyltransferase superfamily. TPMT family.

The protein localises to the cytoplasm. It catalyses the reaction S-adenosyl-L-methionine + a thiopurine = S-adenosyl-L-homocysteine + a thiopurine S-methylether.. The chain is Thiopurine S-methyltransferase from Vibrio cholerae serotype O1 (strain ATCC 39541 / Classical Ogawa 395 / O395).